The chain runs to 229 residues: MAPKKKLQLPPPPTDEEEYWDSQAEEVLDEEEEDMMEDWESLDEEASEVEEVSDETPSPSVAFPSPAPQKSATGSSMATTSAPQAPPALPVRRPNRRWDTTGTRAAHTAPAAAAAAATAAATQKQRRPDSKTLTKPKKSTAAAAAGGGALRLAPNEPVSTRELRNRIFPTLYAIFQQSRGQEQELKIKNRSLRSLTRSCLYHKSEDQLRRTLEDAEALFSKYCALTLKD.

The disordered stretch occupies residues 1–157; sequence MAPKKKLQLP…GALRLAPNEP (157 aa). The span at 14–54 shows a compositional bias: acidic residues; it reads TDEEEYWDSQAEEVLDEEEEDMMEDWESLDEEASEVEEVSD. Low complexity-rich tracts occupy residues 55-64, 71-82, and 100-122; these read ETPSPSVAFP, SATGSSMATTSA, and TTGTRAAHTAPAAAAAAATAAAT. Residues 172–199 are necessary for nuclear subcellular location; the sequence is YAIFQQSRGQEQELKIKNRSLRSLTRSC. The RS-repeat; required for splicing enhancer activity stretch occupies residues 178 to 198; the sequence is SRGQEQELKIKNRSLRSLTRS.

The protein belongs to the adenoviridae splicing factor family. As to quaternary structure, homooligomer. Interacts with DBP; this interaction occurs at a unique vertex during genome packaging. Interacts with IVa2; this interaction occurs at a unique vertex during genome packaging and seems to potentiate IVa2 and 33K oligomerization. Phosphorylated in vitro by human PKA and PRKDC. PRKDC inhibits, whereas PKA activates the splicing factor.

The protein localises to the host nucleus. In terms of biological role, promotes alternative splicing of late transcripts by promoting splicing at weak 3' splice sites. Required for the temporal activation of major late pre-mRNA splicing at late times of infection. Induces the splicing and expression of the late capsid vertex protein. Its function is as follows. Probably functions as the small terminase that is part of the molecular motor that translocates genomic DNA in empty capsid during DNA packaging. This motor is located at a unique vertex and comprises at least the IVa2 ATPase, the small terminase 33K and probably a portal. Forms a ring-like structure of about 17 nm in which genomic DNA is translocated into the capsid. Stimulates IVa2 ATPase activity in the presence of the viral genome. Once the DNA is packaged, the terminase detaches: the 33K protein is present in the empty particles, but not in the mature virions. Also involved in virion assembly. This chain is Protein 33K, found in Homo sapiens (Human).